The chain runs to 206 residues: ATP phosphoribosyltransferase (206 aa).

The protein belongs to the ATP phosphoribosyltransferase family. Short subfamily. Heteromultimer composed of HisG and HisZ subunits.

It is found in the cytoplasm. It carries out the reaction 1-(5-phospho-beta-D-ribosyl)-ATP + diphosphate = 5-phospho-alpha-D-ribose 1-diphosphate + ATP. The protein operates within amino-acid biosynthesis; L-histidine biosynthesis; L-histidine from 5-phospho-alpha-D-ribose 1-diphosphate: step 1/9. Catalyzes the condensation of ATP and 5-phosphoribose 1-diphosphate to form N'-(5'-phosphoribosyl)-ATP (PR-ATP). Has a crucial role in the pathway because the rate of histidine biosynthesis seems to be controlled primarily by regulation of HisG enzymatic activity. The chain is ATP phosphoribosyltransferase from Geobacillus sp. (strain WCH70).